Consider the following 330-residue polypeptide: Aspartate--ammonia ligase (330 aa).

It belongs to the class-II aminoacyl-tRNA synthetase family. AsnA subfamily.

Its subcellular location is the cytoplasm. The enzyme catalyses L-aspartate + NH4(+) + ATP = L-asparagine + AMP + diphosphate + H(+). The protein operates within amino-acid biosynthesis; L-asparagine biosynthesis; L-asparagine from L-aspartate (ammonia route): step 1/1. The sequence is that of Aspartate--ammonia ligase from Escherichia coli O81 (strain ED1a).